We begin with the raw amino-acid sequence, 89 residues long: Protein FAM25A (89 aa).

This sequence belongs to the FAM25 family.

This is Protein FAM25A from Mus musculus (Mouse).